The chain runs to 114 residues: Probable 4-amino-4-deoxy-L-arabinose-phosphoundecaprenol flippase subunit ArnE (114 aa).

Transmembrane regions (helical) follow at residues Leu38–Leu58, Leu64–Ala84, and Leu94–Leu114. An EamA domain is found at Leu43–Trp112.

The protein belongs to the ArnE family. Heterodimer of ArnE and ArnF.

The protein localises to the cell inner membrane. The protein operates within bacterial outer membrane biogenesis; lipopolysaccharide biosynthesis. Functionally, translocates 4-amino-4-deoxy-L-arabinose-phosphoundecaprenol (alpha-L-Ara4N-phosphoundecaprenol) from the cytoplasmic to the periplasmic side of the inner membrane. This is Probable 4-amino-4-deoxy-L-arabinose-phosphoundecaprenol flippase subunit ArnE from Yersinia pestis bv. Antiqua (strain Antiqua).